Reading from the N-terminus, the 731-residue chain is Catalase-peroxidase (731 aa).

Residues 98-226 (WHAAGTYRTA…LAAVQMGLIY (129 aa)) constitute a cross-link (tryptophyl-tyrosyl-methioninium (Trp-Tyr) (with M-252)). The active-site Proton acceptor is H99. The segment at residues 226–252 (YVNPEGPDGNPDIVASGHDVIETFGRM) is a cross-link (tryptophyl-tyrosyl-methioninium (Tyr-Met) (with W-98)). H267 contacts heme b.

It belongs to the peroxidase family. Peroxidase/catalase subfamily. In terms of assembly, homodimer or homotetramer. It depends on heme b as a cofactor. Post-translationally, formation of the three residue Trp-Tyr-Met cross-link is important for the catalase, but not the peroxidase activity of the enzyme.

The enzyme catalyses H2O2 + AH2 = A + 2 H2O. It catalyses the reaction 2 H2O2 = O2 + 2 H2O. Its function is as follows. Bifunctional enzyme with both catalase and broad-spectrum peroxidase activity. In Ruegeria pomeroyi (strain ATCC 700808 / DSM 15171 / DSS-3) (Silicibacter pomeroyi), this protein is Catalase-peroxidase.